The primary structure comprises 517 residues: Shugoshin 1 (517 aa).

Residues 1 to 89 adopt a coiled-coil conformation; sequence MAKERCQKRS…DVILQLRKEC (89 aa). A necessary for interaction with PPP2CA and PPP2R1A region spans residues 1–176; that stretch reads MAKERCQKRS…DFDSGKVEST (176 aa). Disordered regions lie at residues 107–136, 149–173, 267–317, and 334–427; these read QSEETTQNWKGRPSDVVSSIDNTTRDLSGK, PYQTTEPSPAVTPETQGCDFDSGKV, PEQI…TLDG, and HPTP…QESP. Residues 268-291 are a coiled coil; sequence EQIESKHKRARKRRAEQRRTKQRC. Positions 273-302 are enriched in basic residues; it reads KHKRARKRRAEQRRTKQRCKSKSSLRSKGN. Over residues 341–363 the composition is skewed to polar residues; the sequence is KMNNGCNKETDSSNSEVSDLECS. A compositionally biased stretch (basic and acidic residues) spans 379–390; the sequence is RLRDYRESERAV. The residue at position 426 (Ser426) is a Phosphoserine. The PXVXL/I motif signature appears at 441 to 445; sequence PRVKI. The short motif at 447 to 455 is the D-box element; sequence KPSLPPKRR. Ser497 bears the Phosphoserine; by NEK2 mark.

This sequence belongs to the shugoshin family. In terms of assembly, interacts with PPP2CA (or PPP2CB), PPP2R1B, PPP2R5A, PPP2R5B, PPP2R5C, PPP2R5D, PPP2R5E, SET, LRRC59, RBM10 (or RBM5), RPL10A, RPL28, RPL7, RPL7A and RPLP1. Interaction with protein phosphatase 2A occurs most probably through direct binding to the regulatory B56 subunits: PPP2R1B, PPP2R5A, PPP2R5B, PPP2R5C, PPP2R5D, PPP2R5E. Interacts with PPP2R1A and NEK2. Interacts with CDCA8. Ubiquitinated and degraded during mitotic exit by APC/C-Cdh1. Post-translationally, phosphorylation by NEK2 is essential for chromosome congression in mitosis and for the proper attachment of spindle microtubule to the kinetochore. Phosphorylated by PLK1 and AUKRB. In terms of tissue distribution, ubiquitously expressed in proliferating cells. Moderately expressed in the oocytes.

The protein localises to the nucleus. It is found in the chromosome. Its subcellular location is the centromere. It localises to the kinetochore. The protein resides in the cytoplasm. The protein localises to the cytoskeleton. It is found in the spindle pole. Its subcellular location is the microtubule organizing center. It localises to the centrosome. The protein resides in the nucleus speckle. In terms of biological role, plays a central role in chromosome cohesion during mitosis by preventing premature dissociation of cohesin complex from centromeres after prophase, when most of cohesin complex dissociates from chromosomes arms. May act by preventing phosphorylation of the STAG2 subunit of cohesin complex at the centromere, ensuring cohesin persistence at centromere until cohesin cleavage by ESPL1/separase at anaphase. Essential for proper chromosome segregation during mitosis and this function requires interaction with PPP2R1A. Its phosphorylated form is necessary for chromosome congression and for the proper attachment of spindle microtubule to the kinetochore. Necessary for kinetochore localization of PLK1 and CENPF. May play a role in the tension sensing mechanism of the spindle-assembly checkpoint by regulating PLK1 kinetochore affinity. Involved in centromeric enrichment of AUKRB in prometaphase. The chain is Shugoshin 1 from Mus musculus (Mouse).